The sequence spans 572 residues: Urease subunit alpha (572 aa).

The Urease domain maps to 134–572 (GGIDSHIHFI…LPMTQRYFLF (439 aa)). Ni(2+) is bound by residues His-139, His-141, and Lys-222. Lys-222 carries the N6-carboxylysine modification. A substrate-binding site is contributed by His-224. His-251 and His-277 together coordinate Ni(2+). His-325 serves as the catalytic Proton donor. Ni(2+) is bound at residue Asp-365.

It belongs to the metallo-dependent hydrolases superfamily. Urease alpha subunit family. In terms of assembly, heterotrimer of UreA (gamma), UreB (beta) and UreC (alpha) subunits. Three heterotrimers associate to form the active enzyme. It depends on Ni cation as a cofactor. Post-translationally, carboxylation allows a single lysine to coordinate two nickel ions.

It is found in the cytoplasm. The enzyme catalyses urea + 2 H2O + H(+) = hydrogencarbonate + 2 NH4(+). It participates in nitrogen metabolism; urea degradation; CO(2) and NH(3) from urea (urease route): step 1/1. In Polaromonas sp. (strain JS666 / ATCC BAA-500), this protein is Urease subunit alpha.